Reading from the N-terminus, the 874-residue chain is Alanine--tRNA ligase (874 aa).

H562, H566, C665, and H669 together coordinate Zn(2+).

It belongs to the class-II aminoacyl-tRNA synthetase family. Requires Zn(2+) as cofactor.

Its subcellular location is the cytoplasm. The enzyme catalyses tRNA(Ala) + L-alanine + ATP = L-alanyl-tRNA(Ala) + AMP + diphosphate. In terms of biological role, catalyzes the attachment of alanine to tRNA(Ala) in a two-step reaction: alanine is first activated by ATP to form Ala-AMP and then transferred to the acceptor end of tRNA(Ala). Also edits incorrectly charged Ser-tRNA(Ala) and Gly-tRNA(Ala) via its editing domain. The protein is Alanine--tRNA ligase of Pseudomonas syringae pv. tomato (strain ATCC BAA-871 / DC3000).